A 422-amino-acid chain; its full sequence is Chorismate synthase (422 aa).

Positions 43 and 49 each coordinate NADP(+). FMN is bound by residues 143–145, 264–265, Gly309, 324–328, and Arg350; these read RSS, QA, and KPIST.

It belongs to the chorismate synthase family. In terms of assembly, homotetramer. FMNH2 serves as cofactor.

The catalysed reaction is 5-O-(1-carboxyvinyl)-3-phosphoshikimate = chorismate + phosphate. Its pathway is metabolic intermediate biosynthesis; chorismate biosynthesis; chorismate from D-erythrose 4-phosphate and phosphoenolpyruvate: step 7/7. Catalyzes the anti-1,4-elimination of the C-3 phosphate and the C-6 proR hydrogen from 5-enolpyruvylshikimate-3-phosphate (EPSP) to yield chorismate, which is the branch point compound that serves as the starting substrate for the three terminal pathways of aromatic amino acid biosynthesis. This reaction introduces a second double bond into the aromatic ring system. In Corynebacterium jeikeium (strain K411), this protein is Chorismate synthase.